The chain runs to 1333 residues: Partitioning defective 3 homolog (1333 aa).

A Phosphoserine modification is found at Ser25. Thr91 carries the post-translational modification Phosphothreonine. Residues 143–262 (SSDPALTGLS…VGHADTGLEN (120 aa)) are disordered. Polar residues-rich tracts occupy residues 150-163 (GLSTSVSDNNFSSE) and 171-187 (TRWSTTAGFLKQNTAGS). A phosphoserine mark is found at Ser156 and Ser174. Over residues 190–203 (TCDRKKDENYRSLP) the composition is skewed to basic and acidic residues. Residues 207 to 224 (SSWSNQFQRDNARSSLSA) are compositionally biased toward polar residues. In terms of domain architecture, PDZ 1 spans 271–359 (MVKLVQVPND…ARVIWFHVVP (89 aa)). Disordered regions lie at residues 369–388 (LSQREKNNYSPGRFSPDSHC) and 397–441 (NAPQ…APPS). At Ser383 the chain carries Phosphoserine. PDZ domains lie at 461–546 (NIQL…LVFR) and 590–677 (EVPL…GMIQ). Tyr489 carries the phosphotyrosine modification. Phosphoserine is present on residues Ser692, Ser695, Ser715, Ser728, Ser806, and Ser824. 2 interaction with PRKCI and PRKCZ regions span residues 712-932 (RRIS…YDKP) and 712-936 (RRIS…MVDD). Lys831 carries the post-translational modification N6-acetyllysine. Ser834 is subject to Phosphoserine. Residue Lys848 is modified to N6-acetyllysine. Phosphoserine occurs at positions 849 and 869. Disordered regions lie at residues 861–884 (TVDDQRAGSPSRDVGPSLGLKKSS), 928–1011 (SYDK…AKKG), 1024–1071 (KHRK…ERQA), 1110–1267 (PQSP…LGGH), and 1283–1333 (QEQR…PFYS). Residue Lys881 is modified to N6-acetyllysine. The segment at 931–1333 (KPMVDDDDEG…TPEKGRPFYS (403 aa)) is interaction with FRMD4A. Residues 935 to 949 (DDDDEGMETLEEDTE) are compositionally biased toward acidic residues. Ser958 is subject to Phosphoserine; by AURKA. Residues Ser967 and Ser969 each carry the phosphoserine modification. 2 stretches are compositionally biased toward basic and acidic residues: residues 977–1005 (DPEKRDKTERKKDKAGKDKKKDREKEKDK) and 1026–1039 (RKDDKMEKMGRIKI). At Ser1042 the chain carries Phosphoserine. The segment covering 1046 to 1071 (EEDRVRMKEEQERIQAKTREFRERQA) has biased composition (basic and acidic residues). Residues 1046–1078 (EEDRVRMKEEQERIQAKTREFRERQARERDYAE) are a coiled coil. Residues 1134–1143 (PGDSNRSTPS) are compositionally biased toward polar residues. The segment covering 1144 to 1171 (NHDRIQRLRQEFQQAKQDEDVEDRRRTY) has biased composition (basic and acidic residues). Coiled coils occupy residues 1145-1168 (HDRIQRLRQEFQQAKQDEDVEDRR), 1195-1218 (VQVQRQRQEERESFQQAQRQYSSL), and 1274-1295 (MLETQELLRQEQRRKEQQLKKQ). The span at 1176–1199 (SWSSSRPASQSGRHSVSVEVQVQR) shows a compositional bias: low complexity. The span at 1215 to 1236 (YSSLPRQSRKNASSISQDSWEQ) shows a compositional bias: polar residues. Positions 1283 to 1292 (QEQRRKEQQL) are enriched in basic and acidic residues. Over residues 1314–1323 (SQVARLNRLQ) the composition is skewed to polar residues. Basic and acidic residues predominate over residues 1324 to 1333 (TPEKGRPFYS). Lys1327 carries the N6-acetyllysine modification.

This sequence belongs to the PAR3 family. In terms of assembly, interacts with PRCKI and CDH5. Interacts (via PDZ 3 domain) with PTEN (via C-terminus). Component of a complex whose core is composed of ARHGAP17, AMOT, PALS1, PATJ and PARD3/PAR3. Interacts with LIMK2, AURKA and AURKB. Component of the Par polarity complex, composed of at least phosphorylated PRKCZ, PARD3 and TIAM1. Interacts with ECT2 and FBF1. Interacts (via PDZ 1 domain) with F11R/JAM1, PARD6A and PARD6B. Part of a complex with PARD6A or PARD6B, PRKCI or PRKCZ and CDC42 or RAC1. Directly interacts with TIAM1 and TIAM2. Interacts with SIRT2. Interacts (via coiled-coil domain) with FRMD4A. Found in a complex with PARD3, CYTH1 and FRMD4A. Interacts with SAPCD2. Interacts with PRKCA. Interacts with PRKCZ. In terms of processing, acetylated. Deacetylated by SIRT2, thereby inhibiting Schwann cell peripheral myelination. Phosphorylation at Ser-824 by PRKCZ and PRKCI occurs at the most apical tip of epithelial cell-cell contacts during the initial phase of tight junction formation and may promote dissociation of the complex with PARD6. EGF-induced Tyr-1123 phosphorylation mediates dissociation from LIMK2. Phosphorylation by AURKA at Ser-958 is required for the normal establishment of neuronal polarity. Isoform 4 and isoform 5 are phosphorylated during oocyte maturation. As to expression, all isoforms are expressed in heart, while expression in brain is mainly limited to isoform 1, and to isoform 3 to a weaker level.

It localises to the cytoplasm. The protein resides in the endomembrane system. Its subcellular location is the cell junction. It is found in the tight junction. The protein localises to the adherens junction. It localises to the cell cortex. The protein resides in the cytoskeleton. Its subcellular location is the cell membrane. Adapter protein involved in asymmetrical cell division and cell polarization processes. Seems to play a central role in the formation of epithelial tight junctions. Targets the phosphatase PTEN to cell junctions. Association with PARD6B may prevent the interaction of PARD3 with F11R/JAM1, thereby preventing tight junction assembly. The PARD6-PARD3 complex links GTP-bound Rho small GTPases to atypical protein kinase C proteins. Required for establishment of neuronal polarity and normal axon formation in cultured hippocampal neurons. Involved in Schwann cell peripheral myelination. The polypeptide is Partitioning defective 3 homolog (Pard3) (Mus musculus (Mouse)).